The primary structure comprises 488 residues: R3H and coiled-coil domain-containing protein 1 (488 aa).

The 66-residue stretch at 16–81 (NDFVHRVQEE…KRRTVICHLD (66 aa)) folds into the R3H domain. 2 disordered regions span residues 87–180 (SDGP…GDAE) and 195–322 (KSPD…DADH). Residues 114–125 (GAAAGPRGAPAG) show a composition bias toward low complexity. Serine 232 carries the phosphoserine modification. A coiled-coil region spans residues 244–321 (SHGMRSLVDQ…EEDEDEADAD (78 aa)). Over residues 252–265 (DQEEEEIEGEEEEK) the composition is skewed to acidic residues. 2 stretches are compositionally biased toward basic and acidic residues: residues 266–280 (VDEKEEDTGKQKERV) and 287–301 (TDAQEGKVDSEGERM). A compositionally biased stretch (acidic residues) spans 302-319 (DEGEDKVDAEEEDEDEAD).

The protein is R3H and coiled-coil domain-containing protein 1 of Mus musculus (Mouse).